Consider the following 291-residue polypeptide: Acetyl-coenzyme A carboxylase carboxyl transferase subunit beta (291 aa).

Positions 1–23 are disordered; sequence MSWLSKLMPSGIRTDNTPSKKRS. The CoA carboxyltransferase N-terminal domain occupies 28 to 291; the sequence is LWEKCSNCGS…LGRQPAPEVA (264 aa). Residues Cys32, Cys35, Cys51, and Cys54 each coordinate Zn(2+). The C4-type zinc-finger motif lies at 32-54; the sequence is CSNCGSALYRPELEENLEVCPKC.

It belongs to the AccD/PCCB family. Acetyl-CoA carboxylase is a heterohexamer composed of biotin carboxyl carrier protein (AccB), biotin carboxylase (AccC) and two subunits each of ACCase subunit alpha (AccA) and ACCase subunit beta (AccD). Requires Zn(2+) as cofactor.

It localises to the cytoplasm. The catalysed reaction is N(6)-carboxybiotinyl-L-lysyl-[protein] + acetyl-CoA = N(6)-biotinyl-L-lysyl-[protein] + malonyl-CoA. The protein operates within lipid metabolism; malonyl-CoA biosynthesis; malonyl-CoA from acetyl-CoA: step 1/1. Its function is as follows. Component of the acetyl coenzyme A carboxylase (ACC) complex. Biotin carboxylase (BC) catalyzes the carboxylation of biotin on its carrier protein (BCCP) and then the CO(2) group is transferred by the transcarboxylase to acetyl-CoA to form malonyl-CoA. This is Acetyl-coenzyme A carboxylase carboxyl transferase subunit beta from Stenotrophomonas maltophilia (strain R551-3).